Consider the following 166-residue polypeptide: Thioredoxin, mitochondrial (166 aa).

The transit peptide at 1-59 (MAQRLLLRRFLTSVISRKPPQGVWASLTSTSLQTPPYNAGGLTGTPSPARTFHTTRVCS) directs the protein to the mitochondrion. A Thioredoxin domain is found at 61–166 (TFNVQDGPDF…LEAFLKKLIG (106 aa)). Catalysis depends on nucleophile residues Cys90 and Cys93. A disulfide bond links Cys90 and Cys93. Lys152 bears the N6-acetyllysine; alternate mark. At Lys152 the chain carries N6-succinyllysine; alternate.

Belongs to the thioredoxin family. In terms of assembly, monomer. As to expression, expressed in several tissues with the highest expression levels in heart, muscle, kidney and adrenal gland.

The protein resides in the mitochondrion. In terms of biological role, important for the control of mitochondrial reactive oxygen species homeostasis, apoptosis regulation and cell viability. Is involved in various redox reactions including the reduction of protein disulfide bonds, through the reversible oxidation of its active center dithiol to a disulfide. In Rattus norvegicus (Rat), this protein is Thioredoxin, mitochondrial (Txn2).